The following is a 430-amino-acid chain: UDP-N-acetylglucosamine 1-carboxyvinyltransferase (430 aa).

22–23 contacts phosphoenolpyruvate; it reads KN. Arg-102 is a UDP-N-acetyl-alpha-D-glucosamine binding site. The Proton donor role is filled by Cys-126. Position 126 is a 2-(S-cysteinyl)pyruvic acid O-phosphothioketal (Cys-126). Residues 131–135, 172–175, Asp-317, and Ile-339 contribute to the UDP-N-acetyl-alpha-D-glucosamine site; these read RPVDL and KVSV.

Belongs to the EPSP synthase family. MurA subfamily.

It is found in the cytoplasm. It carries out the reaction phosphoenolpyruvate + UDP-N-acetyl-alpha-D-glucosamine = UDP-N-acetyl-3-O-(1-carboxyvinyl)-alpha-D-glucosamine + phosphate. Its pathway is cell wall biogenesis; peptidoglycan biosynthesis. Its function is as follows. Cell wall formation. Adds enolpyruvyl to UDP-N-acetylglucosamine. This chain is UDP-N-acetylglucosamine 1-carboxyvinyltransferase, found in Allorhizobium ampelinum (strain ATCC BAA-846 / DSM 112012 / S4) (Agrobacterium vitis (strain S4)).